A 238-amino-acid chain; its full sequence is uncharacterized protein (238 aa).

7 consecutive transmembrane segments (helical) span residues 22–42 (VYGW…GLYA), 49–69 (LFSL…YIQA), 78–98 (AVMG…GTMV), 105–125 (FGGG…GLSA), 141–161 (ILML…VVSL), 166–186 (PLMY…LTVV), and 208–228 (LSLI…WYLL).

This sequence belongs to the BI1 family.

Its subcellular location is the cell membrane. This is an uncharacterized protein from Chlamydia muridarum (strain MoPn / Nigg).